Here is an 863-residue protein sequence, read N- to C-terminus: Aminopeptidase N (863 aa).

Residues glutamate 124 and 263–267 (GAMEN) each bind substrate. Histidine 299 contacts Zn(2+). The active-site Proton acceptor is glutamate 300. Zn(2+) is bound by residues histidine 303 and glutamate 322.

This sequence belongs to the peptidase M1 family. Requires Zn(2+) as cofactor.

It catalyses the reaction Release of an N-terminal amino acid, Xaa-|-Yaa- from a peptide, amide or arylamide. Xaa is preferably Ala, but may be most amino acids including Pro (slow action). When a terminal hydrophobic residue is followed by a prolyl residue, the two may be released as an intact Xaa-Pro dipeptide.. Its function is as follows. Aminopeptidase N is involved in the degradation of intracellular peptides generated by protein breakdown during normal growth as well as in response to nutrient starvation. The sequence is that of Aminopeptidase N (pepN) from Caulobacter vibrioides (strain ATCC 19089 / CIP 103742 / CB 15) (Caulobacter crescentus).